A 43-amino-acid chain; its full sequence is Potassium channel toxin gamma-KTx 4.11 (43 aa).

Cystine bridges form between Cys-5–Cys-23, Cys-11–Cys-34, Cys-20–Cys-39, and Cys-24–Cys-41.

The protein belongs to the ergtoxin family. Gamma-KTx 4 subfamily. In terms of tissue distribution, expressed by the venom gland.

It localises to the secreted. Its function is as follows. Reversibly blocks Kv11/ERG potassium channels. The protein is Potassium channel toxin gamma-KTx 4.11 of Centruroides noxius (Mexican scorpion).